The primary structure comprises 69 residues: Cytochrome c oxidase subunit 8A, mitochondrial (69 aa).

The N-terminal 25 residues, 1–25, are a transit peptide targeting the mitochondrion; sequence MSVLTPLLLRGLTGSARRLPVPRAK. The SIFI-degron signature appears at 2–19; sequence SVLTPLLLRGLTGSARRL. The Mitochondrial matrix portion of the chain corresponds to 26–36; that stretch reads IHSLPPDEKLG. Residues 37–60 traverse the membrane as a helical segment; it reads IMELAVGLTSCFVTFLLPAGWILS. At 61–69 the chain is on the mitochondrial intermembrane side; the sequence is HLETYRRPE.

The protein belongs to the cytochrome c oxidase VIII family. As to quaternary structure, component of the cytochrome c oxidase (complex IV, CIV), a multisubunit enzyme composed of 14 subunits. The complex is composed of a catalytic core of 3 subunits MT-CO1, MT-CO2 and MT-CO3, encoded in the mitochondrial DNA, and 11 supernumerary subunits COX4I, COX5A, COX5B, COX6A, COX6B, COX6C, COX7A, COX7B, COX7C, COX8 and NDUFA4, which are encoded in the nuclear genome. The complex exists as a monomer or a dimer and forms supercomplexes (SCs) in the inner mitochondrial membrane with NADH-ubiquinone oxidoreductase (complex I, CI) and ubiquinol-cytochrome c oxidoreductase (cytochrome b-c1 complex, complex III, CIII), resulting in different assemblies (supercomplex SCI(1)III(2)IV(1) and megacomplex MCI(2)III(2)IV(2)). In response to mitochondrial stress, the precursor protein is ubiquitinated by the SIFI complex in the cytoplasm before mitochondrial import, leading to its degradation. Within the SIFI complex, UBR4 initiates ubiquitin chain that are further elongated or branched by KCMF1.

The protein localises to the mitochondrion inner membrane. It functions in the pathway energy metabolism; oxidative phosphorylation. In terms of biological role, component of the cytochrome c oxidase, the last enzyme in the mitochondrial electron transport chain which drives oxidative phosphorylation. The respiratory chain contains 3 multisubunit complexes succinate dehydrogenase (complex II, CII), ubiquinol-cytochrome c oxidoreductase (cytochrome b-c1 complex, complex III, CIII) and cytochrome c oxidase (complex IV, CIV), that cooperate to transfer electrons derived from NADH and succinate to molecular oxygen, creating an electrochemical gradient over the inner membrane that drives transmembrane transport and the ATP synthase. Cytochrome c oxidase is the component of the respiratory chain that catalyzes the reduction of oxygen to water. Electrons originating from reduced cytochrome c in the intermembrane space (IMS) are transferred via the dinuclear copper A center (CU(A)) of subunit 2 and heme A of subunit 1 to the active site in subunit 1, a binuclear center (BNC) formed by heme A3 and copper B (CU(B)). The BNC reduces molecular oxygen to 2 water molecules using 4 electrons from cytochrome c in the IMS and 4 protons from the mitochondrial matrix. This Gorilla gorilla gorilla (Western lowland gorilla) protein is Cytochrome c oxidase subunit 8A, mitochondrial (COX8A).